A 193-amino-acid polypeptide reads, in one-letter code: Acyl carrier protein phosphodiesterase (193 aa).

The protein belongs to the AcpH family.

The enzyme catalyses holo-[ACP] + H2O = apo-[ACP] + (R)-4'-phosphopantetheine + H(+). Functionally, converts holo-ACP to apo-ACP by hydrolytic cleavage of the phosphopantetheine prosthetic group from ACP. This is Acyl carrier protein phosphodiesterase from Escherichia coli O6:K15:H31 (strain 536 / UPEC).